The primary structure comprises 438 residues: MATKEFFPGIEKIKFEGKDSKNPMAFRYYDAEKVINGKKMKDWLRFAMAWWHTLCAEGGDQFGGGTKQFPWNGNADAIQAAKDKMDAGFEFMQKMGIEYYCFHDVDLVSEGASVEEYEANLKEIVAYAKQKQAETGIKLLWGTANVFGHARYMNGAATNPDFDVVARAAVQIKNAIDATIELGGENYVFWGGREGYMSLLNTDQKREKEHLAQMLTIARDYARARGFKGTFLIEPKPMEPTKHQYDVDTETVIGFLKAHGLDKDFKVNIEVNHATLAGHTFEHELAVAVDNGMLGSIDANRGDYQNGWDTDQFPIDNYELTQAMMQIIRNGGLGTGGTNFDAKTRRNSTDLEDIFIAHIAGMDAMARALESAAALLDESPYKKMLADRYASFDGGKGKEFEDGKLTLEDVVAYAKTKGEPKQTSGKQELYEAILNMYC.

Active-site residues include His-103 and Asp-106. Glu-234, Glu-270, His-273, Asp-298, Asp-309, Asp-311, and Asp-341 together coordinate Mg(2+).

This sequence belongs to the xylose isomerase family. In terms of assembly, homotetramer. It depends on Mg(2+) as a cofactor.

It localises to the cytoplasm. It carries out the reaction alpha-D-xylose = alpha-D-xylulofuranose. The polypeptide is Xylose isomerase (Bacteroides thetaiotaomicron (strain ATCC 29148 / DSM 2079 / JCM 5827 / CCUG 10774 / NCTC 10582 / VPI-5482 / E50)).